A 443-amino-acid polypeptide reads, in one-letter code: Xaa-Pro dipeptidase (443 aa).

Residues D246, D257, H339, E384, and E423 each contribute to the Mn(2+) site.

Belongs to the peptidase M24B family. Bacterial-type prolidase subfamily. Mn(2+) serves as cofactor.

The catalysed reaction is Xaa-L-Pro dipeptide + H2O = an L-alpha-amino acid + L-proline. Its function is as follows. Splits dipeptides with a prolyl residue in the C-terminal position. This chain is Xaa-Pro dipeptidase, found in Shigella flexneri.